A 126-amino-acid chain; its full sequence is Holo-[acyl-carrier-protein] synthase (126 aa).

Positions 8 and 57 each coordinate Mg(2+).

It belongs to the P-Pant transferase superfamily. AcpS family. It depends on Mg(2+) as a cofactor.

Its subcellular location is the cytoplasm. The catalysed reaction is apo-[ACP] + CoA = holo-[ACP] + adenosine 3',5'-bisphosphate + H(+). In terms of biological role, transfers the 4'-phosphopantetheine moiety from coenzyme A to a Ser of acyl-carrier-protein. This is Holo-[acyl-carrier-protein] synthase from Leptospira interrogans serogroup Icterohaemorrhagiae serovar copenhageni (strain Fiocruz L1-130).